Consider the following 203-residue polypeptide: Urease accessory protein UreE (203 aa).

A disordered region spans residues 170–203 (EHHGHSHSHSHSHSHDHDHQHGPSCSHGHHHGHR).

Belongs to the UreE family.

Its subcellular location is the cytoplasm. Involved in urease metallocenter assembly. Binds nickel. Probably functions as a nickel donor during metallocenter assembly. The polypeptide is Urease accessory protein UreE (Burkholderia mallei (strain SAVP1)).